Reading from the N-terminus, the 322-residue chain is Adenine deaminase (322 aa).

Positions 11, 13, and 189 each coordinate Zn(2+). The Proton donor role is filled by E192. D270 contributes to the Zn(2+) binding site. D271 lines the substrate pocket.

This sequence belongs to the metallo-dependent hydrolases superfamily. Adenosine and AMP deaminases family. Adenine deaminase type 2 subfamily. The cofactor is Zn(2+).

The enzyme catalyses adenine + H2O + H(+) = hypoxanthine + NH4(+). In terms of biological role, catalyzes the hydrolytic deamination of adenine to hypoxanthine. Plays an important role in the purine salvage pathway and in nitrogen catabolism. The chain is Adenine deaminase from Rhizobium leguminosarum bv. trifolii (strain WSM2304).